A 196-amino-acid chain; its full sequence is Ribonuclease HII (196 aa).

The 188-residue stretch at 9 to 196 (KLVAGVDEVG…KPVRHALGIE (188 aa)) folds into the RNase H type-2 domain. 3 residues coordinate a divalent metal cation: Asp-15, Glu-16, and Asp-107.

The protein belongs to the RNase HII family. Requires Mn(2+) as cofactor. It depends on Mg(2+) as a cofactor.

It is found in the cytoplasm. It carries out the reaction Endonucleolytic cleavage to 5'-phosphomonoester.. Functionally, endonuclease that specifically degrades the RNA of RNA-DNA hybrids. The polypeptide is Ribonuclease HII (Aeromonas salmonicida (strain A449)).